The following is a 151-amino-acid chain: Ribonuclease H (151 aa).

The RNase H type-1 domain occupies 2–143; that stretch reads SDDWVEIYTD…ADLLANRGVV (142 aa). Mg(2+) is bound by residues aspartate 11, glutamate 49, aspartate 71, and aspartate 135.

This sequence belongs to the RNase H family. In terms of assembly, monomer. The cofactor is Mg(2+).

The protein localises to the cytoplasm. It catalyses the reaction Endonucleolytic cleavage to 5'-phosphomonoester.. Endonuclease that specifically degrades the RNA of RNA-DNA hybrids. The chain is Ribonuclease H from Stutzerimonas stutzeri (strain A1501) (Pseudomonas stutzeri).